The primary structure comprises 53 residues: Large ribosomal subunit protein bL33 (53 aa).

The protein belongs to the bacterial ribosomal protein bL33 family.

In Ureaplasma parvum serovar 3 (strain ATCC 27815 / 27 / NCTC 11736), this protein is Large ribosomal subunit protein bL33.